Reading from the N-terminus, the 712-residue chain is Secretin OutD (712 aa).

The first 27 residues, 1 to 27, serve as a signal peptide directing secretion; that stretch reads MLGKGIKKSWGWLGLTVLLLGSPCGWA. Residues 28–124 are N0; it reads AEFSASFKGT…LANNEQPGVG (97 aa). The N1 stretch occupies residues 126–190; sequence ELVTRVVPLN…DIVNTVDKTG (65 aa). Residues 191 to 264 are N2; it reads DREMITVSLN…MIRQLDRKQV (74 aa). The tract at residues 267–394 is N3; sequence GGTKVIYLKY…DLEQVINQLD (128 aa). Residues 288–342 are disordered; it reads GNGTSGNRNSSSTNSSRPSSTRSSSTLNNSNSSSSGSSSGSGSSSSSSSSSMGFG. The secretin stretch occupies residues 399-651; that stretch reads QVLVEAIIAE…LFLRPTIIRD (253 aa). Residues 653–712 are s domain; the sequence is QQYQQASISKYNSFNNEQQQQRGQGNSVLDNNTLRLSGGNTYTFRQVQSSISAFYQPEGR.

This sequence belongs to the bacterial secretin family. GSP D subfamily. Forms a cylindrical channel with 15 subunits.

Its subcellular location is the cell outer membrane. Functionally, involved in a type II secretion system (T2SS, formerly general secretion pathway, GSP) for the export of proteins. Required for the translocation of the multiple pectic enzymes. This subunit forms the outer membrane channel. The polypeptide is Secretin OutD (outD) (Dickeya chrysanthemi (Pectobacterium chrysanthemi)).